The primary structure comprises 149 residues: UPF0178 protein VV1_1847 (149 aa).

This sequence belongs to the UPF0178 family.

The polypeptide is UPF0178 protein VV1_1847 (Vibrio vulnificus (strain CMCP6)).